A 211-amino-acid chain; its full sequence is FMN-dependent NADH:quinone oxidoreductase 2 (211 aa).

17–19 contacts FMN; sequence SYS.

Belongs to the azoreductase type 1 family. In terms of assembly, homodimer. It depends on FMN as a cofactor.

It carries out the reaction 2 a quinone + NADH + H(+) = 2 a 1,4-benzosemiquinone + NAD(+). The catalysed reaction is N,N-dimethyl-1,4-phenylenediamine + anthranilate + 2 NAD(+) = 2-(4-dimethylaminophenyl)diazenylbenzoate + 2 NADH + 2 H(+). Its function is as follows. Quinone reductase that provides resistance to thiol-specific stress caused by electrophilic quinones. In terms of biological role, also exhibits azoreductase activity. Catalyzes the reductive cleavage of the azo bond in aromatic azo compounds to the corresponding amines. The chain is FMN-dependent NADH:quinone oxidoreductase 2 from Bacillus licheniformis (strain ATCC 14580 / DSM 13 / JCM 2505 / CCUG 7422 / NBRC 12200 / NCIMB 9375 / NCTC 10341 / NRRL NRS-1264 / Gibson 46).